The sequence spans 281 residues: Auxin-responsive protein IAA19 (281 aa).

The EAR-like (transcriptional repression) motif lies at 40–44 (LRLGL). The disordered stretch occupies residues 66–126 (LGPAPPPRGG…AAGAPRAAKA (61 aa)). The span at 79–91 (GFVDSLDRSEGRR) shows a compositional bias: basic and acidic residues. Residues 114 to 126 (GEAAAGAPRAAKA) show a composition bias toward low complexity. The region spanning 161–265 (CCYVKVSMDG…RKLRIMRGSD (105 aa)) is the PB1 domain.

This sequence belongs to the Aux/IAA family. In terms of assembly, homodimers and heterodimers. As to expression, expressed in etiolated seedlings and flowers.

It is found in the nucleus. Functionally, aux/IAA proteins are short-lived transcriptional factors that function as repressors of early auxin response genes at low auxin concentrations. The protein is Auxin-responsive protein IAA19 (IAA19) of Oryza sativa subsp. japonica (Rice).